The following is a 393-amino-acid chain: Cytotoxic and regulatory T-cell molecule (393 aa).

The signal sequence occupies residues 1 to 17; sequence MWWRVLSLLAWFPLQEA. In terms of domain architecture, Ig-like V-type spans 18–114; it reads SLTNHTETIT…VSTKEVKVIV (97 aa). The Extracellular portion of the chain corresponds to 18-287; the sequence is SLTNHTETIT…YLGLARKKSG (270 aa). Asn21, Asn87, and Asn178 each carry an N-linked (GlcNAc...) asparagine glycan. Intrachain disulfides connect Cys38/Cys98 and Cys141/Cys196. The Ig-like C2-type domain maps to 118–210; sequence PFKPILEASV…RGLQGRKLVA (93 aa). Residues 225 to 273 form a disordered region; sequence SDALERNSLSSQDPQQPTSTVSVTEDSSTSEIDKEEKEQTTQDPDLTTE. The segment covering 231–241 has biased composition (polar residues); sequence NSLSSQDPQQP. Positions 242 to 254 are enriched in low complexity; it reads TSTVSVTEDSSTS. A compositionally biased stretch (basic and acidic residues) spans 255–264; it reads EIDKEEKEQT. Residues 288 to 308 form a helical membrane-spanning segment; the sequence is ILLLTLVSFLIFILFIIVQLF. Residues 309–393 are Cytoplasmic-facing; the sequence is IMKLRKAHVI…KHIQVPESIV (85 aa). Basic and acidic residues-rich tracts occupy residues 328–348 and 374–387; these read HTLE…EEKN and ENVQ…KHIQ. Disordered regions lie at residues 328 to 354 and 374 to 393; these read HTLE…SSHP and ENVQ…ESIV. The short motif at 390–393 is the PDZ-binding element; sequence ESIV.

It belongs to the nectin family. Monomer. May form homodimer (via Ig-like V-type domain). Interacts (via Ig-like V-type domain) with CADM1 (via Ig-like V-type domain); the interaction competes with CRTAM homodimerization and CADM1 homodimerization. Interacts (via PDZ-binding motif) with SCRIB (via PDZ domain 3); the interaction promotes CRTAM and SCRIB polarization in a subset of CD4+ T-cells. In terms of tissue distribution, in the immune system, expression is restricted to activated class-I MHC-restricted cells, including NKT and CD8 T-cells. Strongly expressed in spleen, thymus, small intestine, peripheral blood leukocyte, and in Purkinje neurons in cerebellum. Expressed at much lower levels in testis, ovary, colon, lung and lymphoid tissues.

Its subcellular location is the cell membrane. In terms of biological role, mediates heterophilic cell-cell adhesion which regulates the activation, differentiation and tissue retention of various T-cell subsets. Interaction with CADM1 promotes natural killer (NK) cell cytotoxicity and IFNG/interferon-gamma secretion by CD8+ T-cells in vitro as well as NK cell-mediated rejection of tumors expressing CADM1 in vivo. Regulates CD8+ T-cell proliferation in response to T-cell receptor (TCR) activation. Appears to be dispensable for CD8+ T-cell-mediated cytotoxicity. Interaction with SCRIB promotes the late phase of cellular polarization of a subset of CD4+ T-cells, which in turn regulates TCR-mediated proliferation and IFNG, IL17 and IL22 production. By interacting with CADM1 on CD8+ dendritic cells, regulates the retention of activated CD8+ T-cells within the draining lymph node. Required for the intestinal retention of intraepithelial CD4+ CD8+ T-cells and, to a lesser extent, intraepithelial and lamina propria CD8+ T-cells and CD4+ T-cells. Interaction with CADM1 promotes the adhesion to gut-associated CD103+ dendritic cells, which may facilitate the expression of gut-homing and adhesion molecules on T-cells and the conversion of CD4+ T-cells into CD4+ CD8+ T-cells. The polypeptide is Cytotoxic and regulatory T-cell molecule (Homo sapiens (Human)).